Consider the following 304-residue polypeptide: Probable aquaporin NIP5-1 (304 aa).

A run of 2 helical transmembrane segments spans residues 80–100 and 106–126; these read LGAE…GPIV and GAET…IIIL. The NPA 1 motif lies at 137–139; it reads NPS. The next 3 membrane-spanning stretches (helical) occupy residues 157–177, 195–215, and 219–239; these read AYIA…KGVF, AFAL…AVAT, and AVGE…ILVA. The NPA 2 motif lies at 248-250; that stretch reads NPV. Residues 266–286 form a helical membrane-spanning segment; sequence WVYLVAPTLGAISGAAVYTGV. At Ser-301 the chain carries Phosphoserine.

The protein belongs to the MIP/aquaporin (TC 1.A.8) family. NIP (TC 1.A.8.12) subfamily. Expressed in rosette leaves.

It is found in the cell membrane. Functionally, boric acid transporter. Low water transport activity. Plays an important role as plasma membrane boric acid channel for the boron uptake required for plant growth and development under boron limitation. In Arabidopsis thaliana (Mouse-ear cress), this protein is Probable aquaporin NIP5-1 (NIP5-1).